The following is a 360-amino-acid chain: Melanoma-associated antigen B16 (360 aa).

The tract at residues 1 to 118 is disordered; that stretch reads MSQKNPEYAA…GNSVIPPDQP (118 aa). Residues 9-19 show a composition bias toward basic and acidic residues; sequence AADHDHTREEM. Positions 63–98 are enriched in polar residues; that stretch reads CSSSQLLTASNQEDPAYETPSTSRGLQHPYVSSSES. The MAGE domain maps to 125 to 324; that stretch reads IDGKVNFLVN…TVFPSQYEEA (200 aa). A disordered region spans residues 340 to 360; sequence AGPSSASGESSSDMGSNVPHI. The span at 341-360 shows a compositional bias: low complexity; sequence GPSSASGESSSDMGSNVPHI.

The sequence is that of Melanoma-associated antigen B16 (Mageb16) from Rattus norvegicus (Rat).